The chain runs to 329 residues: tRNA-modifying protein YgfZ (329 aa).

Tryptophan 32 and tryptophan 190 together coordinate folate.

It belongs to the tRNA-modifying YgfZ family.

Its subcellular location is the cytoplasm. Folate-binding protein involved in regulating the level of ATP-DnaA and in the modification of some tRNAs. It is probably a key factor in regulatory networks that act via tRNA modification, such as initiation of chromosomal replication. The sequence is that of tRNA-modifying protein YgfZ from Photobacterium profundum (strain SS9).